A 490-amino-acid chain; its full sequence is MLVSSSFASSIDSVMSHETMSLRRNPPFIDTPEKMPNPTASPNGTIHHLIDPSLPLLSSTTSSSRSTLSSTLNSPPPPPLTTSYSSYNSSACQSITSSPTDNTALAHNSKCYFPHSLSPTPLSSNSSSHVILPPISSFTNLITVAEREFNGRSNSLHANFTSPVPRTVLDHHRHELTFCNPNNTTGFKTITPSPPTQHQSILPTAVDNVPRSKSVSSLPVSGFPPLIVKQQQQQQLNSSSSASALPSIHSPLTNEHTSRYSSSLKDSAKITKQRKKKECPICHNFYANLSTHKSTHLTPEDRPHKCPICQRGFARNNDLIRHKKRHWKDEFMQIYARESDNNSGADDQDDTARTSANNDSDDSNDKLAASSSSEETKLLKKNQLKSLYKIKGAFKCPYNSTLINLDMEVYPHKSRSLYFEPINCHQTGVFSRCDTFKNHLKALHFEYPPKTKKEDRGVVPGKCKHCGLQFPNVDVWLNKHVGKGCGYSYH.

Composition is skewed to low complexity over residues Met1 to Ser16 and Pro52 to Asn73. A disordered region spans residues Met1 to Ser85. A phosphoserine mark is found at Ser153 and Ser155. The span at Gln231–Ser247 shows a compositional bias: low complexity. Residues Gln231 to Gln273 are disordered. Residues Ser250 to Lys265 are compositionally biased toward polar residues. The C2H2-type zinc finger occupies His304–His326. A disordered region spans residues Glu338 to Glu375.

It localises to the cytoplasm. The protein localises to the mitochondrion. It is found in the nucleus. The chain is Zinc finger protein STP4 (STP4) from Saccharomyces cerevisiae (strain ATCC 204508 / S288c) (Baker's yeast).